Here is a 293-residue protein sequence, read N- to C-terminus: ATP synthase gamma chain (293 aa).

This sequence belongs to the ATPase gamma chain family. As to quaternary structure, F-type ATPases have 2 components, CF(1) - the catalytic core - and CF(0) - the membrane proton channel. CF(1) has five subunits: alpha(3), beta(3), gamma(1), delta(1), epsilon(1). CF(0) has three main subunits: a, b and c.

The protein resides in the cell inner membrane. Functionally, produces ATP from ADP in the presence of a proton gradient across the membrane. The gamma chain is believed to be important in regulating ATPase activity and the flow of protons through the CF(0) complex. This chain is ATP synthase gamma chain, found in Nitratidesulfovibrio vulgaris (strain DSM 19637 / Miyazaki F) (Desulfovibrio vulgaris).